The primary structure comprises 524 residues: Cytochrome P450 1A1 (524 aa).

The interval 33–44 (TRTWVPKGLKSP) is mitochondrial targeting signal. An O-linked (GlcNAc) serine glycan is attached at Ser-71. Substrate is bound at residue Phe-228. Cys-461 is a heme binding site.

The protein belongs to the cytochrome P450 family. As to quaternary structure, both Cytochrome P450MT2A and Cytochrome P450MT2B interact with cytosolic chaperones HSP70 and HSP90; this interaction is required for initial targeting to mitochondria. P450MT2B interacts (via mitochondrial targeting signal) with TOMM40 (via N-terminus); this interaction is required for translocation across the mitochondrial outer membrane. Heme serves as cofactor. In terms of processing, two forms; MT2A (long form) and MT2B (short form); are produced by NH2-terminal proteolytic cleavage. This cleavage activates a cryptic mitochondrial targeting signal. In terms of tissue distribution, liver.

It localises to the cytoplasm. The protein resides in the endoplasmic reticulum membrane. The protein localises to the mitochondrion inner membrane. Its subcellular location is the microsome membrane. It catalyses the reaction an organic molecule + reduced [NADPH--hemoprotein reductase] + O2 = an alcohol + oxidized [NADPH--hemoprotein reductase] + H2O + H(+). The catalysed reaction is estrone + reduced [NADPH--hemoprotein reductase] + O2 = 2-hydroxyestrone + oxidized [NADPH--hemoprotein reductase] + H2O + H(+). The enzyme catalyses estrone + reduced [NADPH--hemoprotein reductase] + O2 = 4-hydroxyestrone + oxidized [NADPH--hemoprotein reductase] + H2O + H(+). It carries out the reaction estrone + reduced [NADPH--hemoprotein reductase] + O2 = 6alpha-hydroxyestrone + oxidized [NADPH--hemoprotein reductase] + H2O + H(+). It catalyses the reaction estrone + reduced [NADPH--hemoprotein reductase] + O2 = 15alpha-hydroxyestrone + oxidized [NADPH--hemoprotein reductase] + H2O + H(+). The catalysed reaction is estrone + reduced [NADPH--hemoprotein reductase] + O2 = 16alpha-hydroxyestrone + oxidized [NADPH--hemoprotein reductase] + H2O + H(+). The enzyme catalyses 17beta-estradiol + reduced [NADPH--hemoprotein reductase] + O2 = 2-hydroxy-17beta-estradiol + oxidized [NADPH--hemoprotein reductase] + H2O + H(+). It carries out the reaction 17beta-estradiol + reduced [NADPH--hemoprotein reductase] + O2 = 4-hydroxy-17beta-estradiol + oxidized [NADPH--hemoprotein reductase] + H2O + H(+). It catalyses the reaction 17beta-estradiol + reduced [NADPH--hemoprotein reductase] + O2 = 6alpha-hydroxy-17beta-estradiol + oxidized [NADPH--hemoprotein reductase] + H2O + H(+). The catalysed reaction is 17beta-estradiol + reduced [NADPH--hemoprotein reductase] + O2 = 7alpha-hydroxy-17beta-estradiol + oxidized [NADPH--hemoprotein reductase] + H2O + H(+). The enzyme catalyses 17beta-estradiol + reduced [NADPH--hemoprotein reductase] + O2 = 15alpha-hydroxy-17beta-estradiol + oxidized [NADPH--hemoprotein reductase] + H2O + H(+). It carries out the reaction (5Z,8Z,11Z)-eicosatrienoate + reduced [NADPH--hemoprotein reductase] + O2 = 19-hydroxy-(5Z,8Z,11Z)-eicosatrienoate + oxidized [NADPH--hemoprotein reductase] + H2O + H(+). It catalyses the reaction (5Z,8Z,11Z,14Z)-eicosatetraenoate + reduced [NADPH--hemoprotein reductase] + O2 = 16-hydroxy-(5Z,8Z,11Z,14Z)-eicosatetraenoate + oxidized [NADPH--hemoprotein reductase] + H2O + H(+). The catalysed reaction is (5Z,8Z,11Z,14Z)-eicosatetraenoate + reduced [NADPH--hemoprotein reductase] + O2 = 17-hydroxy-(5Z,8Z,11Z,14Z)-eicosatetraenoate + oxidized [NADPH--hemoprotein reductase] + H2O + H(+). The enzyme catalyses (5Z,8Z,11Z,14Z)-eicosatetraenoate + reduced [NADPH--hemoprotein reductase] + O2 = 18-hydroxy-(5Z,8Z,11Z,14Z)-eicosatetraenoate + oxidized [NADPH--hemoprotein reductase] + H2O + H(+). It carries out the reaction (5Z,8Z,11Z,14Z)-eicosatetraenoate + reduced [NADPH--hemoprotein reductase] + O2 = 19-hydroxy-(5Z,8Z,11Z,14Z)-eicosatetraenoate + oxidized [NADPH--hemoprotein reductase] + H2O + H(+). It catalyses the reaction (5Z,8Z,11Z,14Z,17Z)-eicosapentaenoate + reduced [NADPH--hemoprotein reductase] + O2 = 19-hydroxy-(5Z,8Z,11Z,14Z,17Z)-eicosapentaenoate + oxidized [NADPH--hemoprotein reductase] + H2O + H(+). The catalysed reaction is (5Z,8Z,11Z,14Z)-eicosatetraenoate + reduced [NADPH--hemoprotein reductase] + O2 = (8R,9S)-epoxy-(5Z,11Z,14Z)-eicosatrienoate + oxidized [NADPH--hemoprotein reductase] + H2O + H(+). The enzyme catalyses (5Z,8Z,11Z,14Z)-eicosatetraenoate + reduced [NADPH--hemoprotein reductase] + O2 = (11R,12S)-epoxy-(5Z,8Z,14Z)-eicosatrienoate + oxidized [NADPH--hemoprotein reductase] + H2O + H(+). It carries out the reaction (5Z,8Z,11Z,14Z)-eicosatetraenoate + reduced [NADPH--hemoprotein reductase] + O2 = (11S,12R)-epoxy-(5Z,8Z,14Z)-eicosatrienoate + oxidized [NADPH--hemoprotein reductase] + H2O + H(+). It catalyses the reaction (5Z,8Z,11Z,14Z)-eicosatetraenoate + reduced [NADPH--hemoprotein reductase] + O2 = (14R,15S)-epoxy-(5Z,8Z,11Z)-eicosatrienoate + oxidized [NADPH--hemoprotein reductase] + H2O + H(+). The catalysed reaction is (5Z,8Z,11Z,14Z,17Z)-eicosapentaenoate + reduced [NADPH--hemoprotein reductase] + O2 = (17R,18S)-epoxy-(5Z,8Z,11Z,14Z)-eicosatetraenoate + oxidized [NADPH--hemoprotein reductase] + H2O + H(+). The enzyme catalyses (4Z,7Z,10Z,13Z,16Z,19Z)-docosahexaenoate + reduced [NADPH--hemoprotein reductase] + O2 = (19S,20R)-epoxy-(4Z,7Z,10Z,13Z,16Z)-docosapentaenoate + oxidized [NADPH--hemoprotein reductase] + H2O + H(+). It carries out the reaction (4Z,7Z,10Z,13Z,16Z,19Z)-docosahexaenoate + reduced [NADPH--hemoprotein reductase] + O2 = (19R,20S)-epoxy-(4Z,7Z,10Z,13Z,16Z)-docosapentaenoate + oxidized [NADPH--hemoprotein reductase] + H2O + H(+). It catalyses the reaction all-trans-retinol + reduced [NADPH--hemoprotein reductase] + O2 = all-trans-retinal + oxidized [NADPH--hemoprotein reductase] + 2 H2O + H(+). The catalysed reaction is all-trans-retinal + reduced [NADPH--hemoprotein reductase] + O2 = all-trans-retinoate + oxidized [NADPH--hemoprotein reductase] + H2O + 2 H(+). The enzyme catalyses (13S)-hydroperoxy-(9Z,11E)-octadecadienoate = 13-oxo-(9Z,11E)-octadecadienoate + H2O. It carries out the reaction (12S)-hydroperoxy-(5Z,8Z,10E,14Z)-eicosatetraenoate = 12-oxo-(5Z,8Z,10E,14Z)-eicosatetraenoate + H2O. It catalyses the reaction (15S)-hydroperoxy-(5Z,8Z,11Z,13E)-eicosatetraenoate = 15-oxo-(5Z,8Z,11Z,13E)-eicosatetraenoate + H2O. The catalysed reaction is (5S)-hydroperoxy-(6E,8Z,11Z,14Z)-eicosatetraenoate = 5-oxo-(6E,8Z,11Z,14Z)-eicosatetraenoate + H2O. Its pathway is steroid hormone biosynthesis. The protein operates within lipid metabolism; fatty acid metabolism. It participates in cofactor metabolism; retinol metabolism. Functionally, a cytochrome P450 monooxygenase involved in the metabolism of various endogenous substrates, including fatty acids, steroid hormones and vitamins. Mechanistically, uses molecular oxygen inserting one oxygen atom into a substrate, and reducing the second into a water molecule, with two electrons provided by NADPH via cytochrome P450 reductase (CPR; NADPH-ferrihemoprotein reductase). Catalyzes the hydroxylation of carbon-hydrogen bonds. Exhibits high catalytic activity for the formation of hydroxyestrogens from estrone (E1) and 17beta-estradiol (E2), namely 2-hydroxy E1 and E2, as well as D-ring hydroxylated E1 and E2 at the C15alpha and C16alpha positions. Displays different regioselectivities for polyunsaturated fatty acids (PUFA) hydroxylation. Catalyzes the epoxidation of double bonds of certain PUFA. Converts arachidonic acid toward epoxyeicosatrienoic acid (EET) regioisomers, 8,9-, 11,12-, and 14,15-EET, that function as lipid mediators in the vascular system. Displays an absolute stereoselectivity in the epoxidation of eicosapentaenoic acid (EPA) producing the 17(R),18(S) enantiomer. May play an important role in all-trans retinoic acid biosynthesis in extrahepatic tissues. Catalyzes two successive oxidative transformation of all-trans retinol to all-trans retinal and then to the active form all-trans retinoic acid. May also participate in eicosanoids metabolism by converting hydroperoxide species into oxo metabolites (lipoxygenase-like reaction, NADPH-independent). The protein is Cytochrome P450 1A1 of Rattus norvegicus (Rat).